The primary structure comprises 196 residues: Aliphatic amidase regulator (196 aa).

The region spanning 129–190 is the ANTAR domain; that stretch reads MAKLKQKTEQ…PILKIAQELL (62 aa).

As to quaternary structure, forms a complex with AmiC.

Functionally, positive controlling element of AmiE, the gene for aliphatic amidase. Acts as a transcriptional antitermination factor. It is thought to allow RNA polymerase read through a rho-independent transcription terminator between the AmiE promoter and gene. This is Aliphatic amidase regulator (amiR) from Pseudomonas aeruginosa (strain ATCC 15692 / DSM 22644 / CIP 104116 / JCM 14847 / LMG 12228 / 1C / PRS 101 / PAO1).